We begin with the raw amino-acid sequence, 123 residues long: ATP synthase epsilon chain (123 aa).

The protein belongs to the ATPase epsilon chain family. In terms of assembly, F-type ATPases have 2 components, CF(1) - the catalytic core - and CF(0) - the membrane proton channel. CF(1) has five subunits: alpha(3), beta(3), gamma(1), delta(1), epsilon(1). CF(0) has three main subunits: a, b and c.

The protein localises to the cell inner membrane. Its function is as follows. Produces ATP from ADP in the presence of a proton gradient across the membrane. This Helicobacter acinonychis (strain Sheeba) protein is ATP synthase epsilon chain.